The primary structure comprises 409 residues: Broad specificity amino-acid racemase (409 aa).

Residues 1–23 (MPFSRTLLALSLGMALLQNPAFA) form the signal peptide. C70 and C96 are disulfide-bonded. Residue K74 is the Proton acceptor of the active site. N6-(pyridoxal phosphate)lysine is present on K74. R173 lines the substrate pocket. Y300 (proton acceptor) is an active-site residue. Residue M348 coordinates substrate.

The protein belongs to the alanine racemase family. Bsr subfamily. In terms of assembly, homodimer. The cofactor is pyridoxal 5'-phosphate.

The protein resides in the periplasm. The catalysed reaction is an L-alpha-amino acid = a D-alpha-amino acid. It carries out the reaction L-lysine = D-lysine. It catalyses the reaction L-arginine = D-arginine. The enzyme catalyses L-ornithine = D-ornithine. The catalysed reaction is L-alanine = D-alanine. It carries out the reaction L-methionine = D-methionine. Its function is as follows. Amino-acid racemase able to utilize a broad range of substrates. Is mostly active with lysine and arginine and, to a lesser extent, with ornithine, whereas is about 10 times less active with alanine, methionine and ethionine. With phenylalanine as substrate only a trace activity is detectable, and is inactive with glutamate. Plays a key role in the catabolism of D-arginine and D-lysine, that allows P.taetrolens strain NBRC 3460 to grow on these basic D-amino acids as a sole carbon source. This Pseudomonas taetrolens protein is Broad specificity amino-acid racemase.